The chain runs to 382 residues: Putative glutamate--cysteine ligase 2-1 (382 aa).

It belongs to the glutamate--cysteine ligase type 2 family. YbdK subfamily.

It carries out the reaction L-cysteine + L-glutamate + ATP = gamma-L-glutamyl-L-cysteine + ADP + phosphate + H(+). In terms of biological role, ATP-dependent carboxylate-amine ligase which exhibits weak glutamate--cysteine ligase activity. The polypeptide is Putative glutamate--cysteine ligase 2-1 (Nocardioides sp. (strain ATCC BAA-499 / JS614)).